Consider the following 240-residue polypeptide: MRWKDEGIIIAAKKYGDKNLILSLFTKNHGKRRGLTKLTNNSNYKFQISNLLHAEWSAKLPENLGFFKCELIESSFHHFFQDRLKSITIVSFSSILEKVLPESEPCAVLYDNFRYFIDVIKHNNQSWQSHYLNLELLLLTQLGFKLDLSKCAVTGVKENLQFISPKTGRAVSKKAGDYYADKLLPFPQMLHDVYNNNLQNSYSFQEFQLGLKVTGYFLNKYLFLQLNVKFPELRNLMLSL.

Belongs to the RecO family.

Involved in DNA repair and RecF pathway recombination. The protein is DNA repair protein RecO of Wolbachia sp. subsp. Drosophila simulans (strain wRi).